The sequence spans 228 residues: PKHD-type hydroxylase XC_1340 (228 aa).

The region spanning 78–180 (RIYPPLFNRY…RVASFFWIQS (103 aa)) is the Fe2OG dioxygenase domain. Fe cation-binding residues include His-96, Asp-98, and His-161. 2-oxoglutarate is bound at residue Arg-171.

Fe(2+) is required as a cofactor. L-ascorbate serves as cofactor.

This chain is PKHD-type hydroxylase XC_1340, found in Xanthomonas campestris pv. campestris (strain 8004).